Here is a 658-residue protein sequence, read N- to C-terminus: Probable transketolase (658 aa).

Residue His24 coordinates substrate. Residues His64 and Gly113 to Leu115 contribute to the thiamine diphosphate site. Asp154 serves as a coordination point for Mg(2+). Thiamine diphosphate contacts are provided by Gly155 and Asn184. Mg(2+) contacts are provided by Asn184 and Ile186. Substrate is bound by residues His259, Arg354, and Ser381. His259 contributes to the thiamine diphosphate binding site. The active-site Proton donor is the Glu408. Phe434 is a thiamine diphosphate binding site. Residues His458, Asp466, and Arg517 each contribute to the substrate site.

The protein belongs to the transketolase family. Homodimer. Requires Mg(2+) as cofactor. It depends on Ca(2+) as a cofactor. The cofactor is Mn(2+). Co(2+) is required as a cofactor. Thiamine diphosphate serves as cofactor.

The catalysed reaction is D-sedoheptulose 7-phosphate + D-glyceraldehyde 3-phosphate = aldehydo-D-ribose 5-phosphate + D-xylulose 5-phosphate. Functionally, necessary for high-efficiency recombination chromosomal DNA during genetic transformation. Catalyzes the transfer of a two-carbon ketol group from a ketose donor to an aldose acceptor, via a covalent intermediate with the cofactor thiamine pyrophosphate. This is Probable transketolase (tkt) from Streptococcus pneumoniae serotype 4 (strain ATCC BAA-334 / TIGR4).